We begin with the raw amino-acid sequence, 425 residues long: Histone-binding protein RBBP4 (425 aa).

Alanine 2 bears the N-acetylalanine mark. Lysine 4 bears the N6-acetyllysine; alternate mark. A Glycyl lysine isopeptide (Lys-Gly) (interchain with G-Cter in SUMO2); alternate cross-link involves residue lysine 4. A Glycyl lysine isopeptide (Lys-Gly) (interchain with G-Cter in ubiquitin); alternate cross-link involves residue lysine 4. 7 WD repeats span residues 32–125, 126–175, 176–223, 225–270, 271–314, 315–371, and 372–404; these read YDLV…NHEG, EVNR…RLRG, HQKE…KTIF, GHTA…HSVD, AHTA…HSFE, SHKD…FIHG, and GHTA…VWQM. Residue serine 110 is modified to Phosphoserine. At lysine 160 the chain carries N6-acetyllysine; alternate. A Glycyl lysine isopeptide (Lys-Gly) (interchain with G-Cter in SUMO2); alternate cross-link involves residue lysine 160. Serine 355 carries the phosphoserine modification.

The protein belongs to the WD repeat RBAP46/RBAP48/MSI1 family. In terms of assembly, binds directly to helix 1 of the histone fold of histone H4, a region that is not accessible when H4 is in chromatin. Subunit of the chromatin assembly factor 1 (CAF-1) complex, which is composed of RBBP4, CHAF1B and CHAF1A. Subunit of the core histone deacetylase (HDAC) complex, which is composed of HDAC1, HDAC2, RBBP4 and RBBP7. The core HDAC complex associates with SIN3A, ARID4B/SAP180, SAP18, SAP30, SAP130, SUDS3/SAP45 and possibly ARID4A/RBP1 and ING1 to form the SIN3 HDAC complex. Component of the nucleosome remodeling and deacetylase (NuRD) repressor complex, composed of core proteins MTA1, MTA2, MTA3, RBBP4, RBBP7, HDAC1, HDAC2, MBD2, MBD3, and peripherally associated proteins CDK2AP1, CDK2AP2, GATAD2A, GATAD2B, CHD3, CHD4 and CHD5. The exact stoichiometry of the NuRD complex is unknown, and some subunits such as MBD2 and MBD3, GATAD2A and GATAD2B, and CHD3, CHD4 and CHD5 define mutually exclusive NuRD complexes. Interacts with ZNF512B; the interaction is direct and may play a role in repressing gene expression. The NuRD complex may also interact with MBD3L1 and MBD3L2. Component of the PRC2 complex, which consists of the core subunits EED, EZH1 or EZH2, SUZ12, and RBBP4, and various combinations of accessory subunits including AEBP2, JARID2, PHF19, MTF2 and EPOP. Forms a monomeric PRC2.2 (class 2) complex consisting of at least SUZ12, RBBP4, AEBP2 and JARID2. Forms a dimeric PRC2.1 (class 1, PRC-PCL) complex consisting of at least SUZ12, RBBP4, and PHF19; PHF19 stabilizes the dimeric structure which enhances PRC2 interaction with chromatin. Component of the NURF-1 ISWI chromatin remodeling complex (also called the nucleosome-remodeling factor (NURF) complex) at least composed of SMARCA1 (isoform 2), BPTF, RBBP4 and RBBP7. Within the complex interacts with isoform 2 of SMARCA1. Component of the BPFT-SMARCA1 complex at least composed of SMARCA1 (isoform 1), BPFT, RBBP4 and RBBP7; the complex is catalytically inactive and does not remodel chromatin. Within the complex interacts with isoform 1 of SMARCA1. Interacts with the ISWI chromatin remodeling complex component SMARCA5; the interaction is direct. Interacts with the viral protein-binding domain of the retinoblastoma protein (RB1). Component of the DREAM complex (also named LINC complex) at least composed of E2F4, E2F5, LIN9, LIN37, LIN52, LIN54, MYBL1, MYBL2, RBL1, RBL2, RBBP4, TFDP1 and TFDP2. The complex exists in quiescent cells where it represses cell cycle-dependent genes. It dissociates in S phase when LIN9, LIN37, LIN52 and LIN54 form a subcomplex that binds to MYBL2. Found in a complex composed of at least SINHCAF, SIN3A, HDAC1, SAP30, RBBP4, OGT and TET1. Interacts with ZNF827; the interaction is direct and recruits RBBP4 to telomeres. Interacts with MTA1; the interaction is direct and mutually exclusive with binding histone H4. Interacts with ARMC12 (via ARM domains). Interacts with BRCA1. Interacts with CDK2AP1. Interacts with CREBBP, and this interaction may be enhanced by the binding of phosphorylated CREB1 to CREBBP. Interacts with ERCC6. Interacts with HDAC7. Interacts with PHF6. Interacts with PWWP2B. Interacts with SPEN/MINT. Interacts with SUV39H1.

The protein localises to the nucleus. Its subcellular location is the chromosome. It localises to the telomere. Functionally, core histone-binding subunit that may target chromatin assembly factors, chromatin remodeling factors and histone deacetylases to their histone substrates in a manner that is regulated by nucleosomal DNA. Component of the chromatin assembly factor 1 (CAF-1) complex, which is required for chromatin assembly following DNA replication and DNA repair. Component of the core histone deacetylase (HDAC) complex, which promotes histone deacetylation and consequent transcriptional repression. Component of the nucleosome remodeling and histone deacetylase complex (the NuRD complex), which promotes transcriptional repression by histone deacetylation and nucleosome remodeling. Component of the PRC2 complex, which promotes repression of homeotic genes during development. Component of the NURF (nucleosome remodeling factor) complex. This Bos taurus (Bovine) protein is Histone-binding protein RBBP4 (RBBP4).